A 392-amino-acid chain; its full sequence is Ribonuclease D (392 aa).

The region spanning 12 to 178 (LIETTEALAA…PVYEGLRARL (167 aa)) is the 3'-5' exonuclease domain. The HRDC domain maps to 217–298 (NRRQLALVKA…ASTKAIPDAE (82 aa)).

Belongs to the RNase D family. It depends on a divalent metal cation as a cofactor.

Its subcellular location is the cytoplasm. It carries out the reaction Exonucleolytic cleavage that removes extra residues from the 3'-terminus of tRNA to produce 5'-mononucleotides.. Exonuclease involved in the 3' processing of various precursor tRNAs. Initiates hydrolysis at the 3'-terminus of an RNA molecule and releases 5'-mononucleotides. This Acidiphilium cryptum (strain JF-5) protein is Ribonuclease D.